We begin with the raw amino-acid sequence, 211 residues long: FMN-dependent NADH:quinone oxidoreductase (211 aa).

Residues Ser10 and 16 to 18 (SVS) each bind FMN.

The protein belongs to the azoreductase type 1 family. In terms of assembly, homodimer. It depends on FMN as a cofactor.

The enzyme catalyses 2 a quinone + NADH + H(+) = 2 a 1,4-benzosemiquinone + NAD(+). It catalyses the reaction N,N-dimethyl-1,4-phenylenediamine + anthranilate + 2 NAD(+) = 2-(4-dimethylaminophenyl)diazenylbenzoate + 2 NADH + 2 H(+). In terms of biological role, quinone reductase that provides resistance to thiol-specific stress caused by electrophilic quinones. Its function is as follows. Also exhibits azoreductase activity. Catalyzes the reductive cleavage of the azo bond in aromatic azo compounds to the corresponding amines. The protein is FMN-dependent NADH:quinone oxidoreductase of Parafrankia sp. (strain EAN1pec).